The primary structure comprises 197 residues: FMN-dependent NADH:quinone oxidoreductase (197 aa).

FMN contacts are provided by residues serine 10, 16 to 18 (SQS), 93 to 96 (MYNF), and 137 to 140 (TRGG).

Belongs to the azoreductase type 1 family. Homodimer. The cofactor is FMN.

The enzyme catalyses 2 a quinone + NADH + H(+) = 2 a 1,4-benzosemiquinone + NAD(+). The catalysed reaction is N,N-dimethyl-1,4-phenylenediamine + anthranilate + 2 NAD(+) = 2-(4-dimethylaminophenyl)diazenylbenzoate + 2 NADH + 2 H(+). Its function is as follows. Quinone reductase that provides resistance to thiol-specific stress caused by electrophilic quinones. Also exhibits azoreductase activity. Catalyzes the reductive cleavage of the azo bond in aromatic azo compounds to the corresponding amines. This Shewanella frigidimarina (strain NCIMB 400) protein is FMN-dependent NADH:quinone oxidoreductase.